A 432-amino-acid polypeptide reads, in one-letter code: Glutamate-1-semialdehyde 2,1-aminomutase (432 aa).

Lysine 269 bears the N6-(pyridoxal phosphate)lysine mark.

This sequence belongs to the class-III pyridoxal-phosphate-dependent aminotransferase family. HemL subfamily. As to quaternary structure, homodimer. Requires pyridoxal 5'-phosphate as cofactor.

It localises to the cytoplasm. It carries out the reaction (S)-4-amino-5-oxopentanoate = 5-aminolevulinate. Its pathway is porphyrin-containing compound metabolism; protoporphyrin-IX biosynthesis; 5-aminolevulinate from L-glutamyl-tRNA(Glu): step 2/2. This chain is Glutamate-1-semialdehyde 2,1-aminomutase, found in Desulforamulus reducens (strain ATCC BAA-1160 / DSM 100696 / MI-1) (Desulfotomaculum reducens).